Reading from the N-terminus, the 287-residue chain is MKRIFLLIVTNLAVLLVASIVMSILGVNTSTMGGLLVFAAIFGFGGAFISLAISKWMAKKTMGCEVITTPRDSTERWLLDTVARQAQQAGIKMPEVAIYQSPEMNAFATGPSKDNSLVAVSTGLLYGMSQDEIEGVLAHEVSHVANGDMVTLTLIQGVVNTFVIFAARVVAGIINNFVSSNDEEGEGLGMFAYMAVVFVLDMLFGILASIIVAYFSRIREYRADEGAARLAGKNKMIAALERLRQGPESSAMPAQMSAFGINGKRSMAELMMSHPPLEKRIAALQSR.

Transmembrane regions (helical) follow at residues 4 to 24 and 33 to 53; these read IFLLIVTNLAVLLVASIVMSI and GGLLVFAAIFGFGGAFISLAI. Histidine 139 is a binding site for Zn(2+). The active site involves glutamate 140. Histidine 143 is a Zn(2+) binding site. The next 2 membrane-spanning stretches (helical) occupy residues 154 to 174 and 195 to 215; these read LIQGVVNTFVIFAARVVAGII and AVVFVLDMLFGILASIIVAYF. Glutamate 220 contributes to the Zn(2+) binding site.

This sequence belongs to the peptidase M48B family. Zn(2+) serves as cofactor.

Its subcellular location is the cell inner membrane. In Shewanella oneidensis (strain ATCC 700550 / JCM 31522 / CIP 106686 / LMG 19005 / NCIMB 14063 / MR-1), this protein is Protease HtpX.